Reading from the N-terminus, the 76-residue chain is Candidate secreted effector protein MPL124497 (76 aa).

The N-terminal stretch at 1–21 (MKLIIFAAISVAFMSFDQVLG) is a signal peptide.

It belongs to the CPGH1 family.

It is found in the secreted. The protein resides in the host cell. The protein localises to the host cytoplasm. It localises to the host nucleus. Rust effector delivered into infected tissues to modulate host functions and contribute to pathogen virulence. Enhances leaf colonization by the bacteria Pseudomonas syringae and the oomycete Hyaloperonospora arabidopsidis pathogens in an Arabidopsis thaliana infection model. This chain is Candidate secreted effector protein MPL124497, found in Melampsora larici-populina (strain 98AG31 / pathotype 3-4-7) (Poplar leaf rust fungus).